The sequence spans 381 residues: Probable cyclic AMP-AMP-GMP nucleotide synthase (381 aa).

GTP is bound by residues serine 53 and arginine 56. Active-site residues include aspartate 69 and aspartate 71. Aspartate 69 and aspartate 71 together coordinate Mg(2+). Arginine 109 is a binding site for GTP. Residue aspartate 121 is part of the active site. 2 residues coordinate Mg(2+): aspartate 121 and aspartate 196. GTP contacts are provided by arginine 197, arginine 204, threonine 205, glutamine 210, and arginine 307. The segment at 348–381 is disordered; the sequence is GTKFPFPGPQGGDRSGGFTAPTQPAEPQKTGRFA.

It belongs to the CD-NTase family. D02 subfamily. Mg(2+) is required as a cofactor.

It catalyses the reaction GTP + 2 ATP = 3',3',3'-cAAG + 3 diphosphate. In terms of biological role, cyclic nucleotide synthase (second messenger synthase) of a CBASS antivirus system. CBASS (cyclic oligonucleotide-based antiphage signaling system) provides immunity against bacteriophage. The CD-NTase protein synthesizes cyclic nucleotides in response to infection; these serve as specific second messenger signals. The signals activate a diverse range of effectors, leading to bacterial cell death and thus abortive phage infection. Functionally, cyclic nucleotide synthase, synthesizes a tricyclic nucleotide with AMP and GMP moieties, probably 3',3',3'-cyclic AMP-AMP-GMP (3'3'3'-cAAG). Controls the activity of the associated CBASS effector protein. This is Probable cyclic AMP-AMP-GMP nucleotide synthase from Salmonella paratyphi B (Salmonella enterica subsp. enterica serovar Paratyphi B).